A 99-amino-acid chain; its full sequence is Large ribosomal subunit protein bL28 (99 aa).

It belongs to the bacterial ribosomal protein bL28 family.

The protein is Large ribosomal subunit protein bL28 of Brucella anthropi (strain ATCC 49188 / DSM 6882 / CCUG 24695 / JCM 21032 / LMG 3331 / NBRC 15819 / NCTC 12168 / Alc 37) (Ochrobactrum anthropi).